The primary structure comprises 240 residues: Biosynthetic peptidoglycan transglycosylase (240 aa).

Residues 16-36 (VLMALLCLFLIYELAMFSMVV) traverse the membrane as a helical segment.

It belongs to the glycosyltransferase 51 family.

It localises to the cell inner membrane. It carries out the reaction [GlcNAc-(1-&gt;4)-Mur2Ac(oyl-L-Ala-gamma-D-Glu-L-Lys-D-Ala-D-Ala)](n)-di-trans,octa-cis-undecaprenyl diphosphate + beta-D-GlcNAc-(1-&gt;4)-Mur2Ac(oyl-L-Ala-gamma-D-Glu-L-Lys-D-Ala-D-Ala)-di-trans,octa-cis-undecaprenyl diphosphate = [GlcNAc-(1-&gt;4)-Mur2Ac(oyl-L-Ala-gamma-D-Glu-L-Lys-D-Ala-D-Ala)](n+1)-di-trans,octa-cis-undecaprenyl diphosphate + di-trans,octa-cis-undecaprenyl diphosphate + H(+). It functions in the pathway cell wall biogenesis; peptidoglycan biosynthesis. Functionally, peptidoglycan polymerase that catalyzes glycan chain elongation from lipid-linked precursors. This Bordetella avium (strain 197N) protein is Biosynthetic peptidoglycan transglycosylase.